The chain runs to 359 residues: Bergaptol O-methyltransferase (359 aa).

His-126 is a binding site for bergaptol. 5 residues coordinate S-adenosyl-L-homocysteine: Ser-179, Gly-203, Asp-226, Asp-246, and Lys-260. His-264 provides a ligand contact to bergaptol. His-264 serves as the catalytic Proton acceptor.

Belongs to the class I-like SAM-binding methyltransferase superfamily. Cation-independent O-methyltransferase family. COMT subfamily. As to quaternary structure, homodimer. Mostly expressed in roots and, to a lower extent, in stems and leaves.

It localises to the cytoplasm. It catalyses the reaction bergaptol + S-adenosyl-L-methionine = bergapten + S-adenosyl-L-homocysteine. The protein operates within aromatic compound metabolism. Its pathway is secondary metabolite biosynthesis. O-methyltransferase involved in the biosynthesis of furocoumarins natural products such as bergapten, a photosensitizer used for medical purpose such as treating psoriasis and vitiligo or facilitating resistance to microbial infection and other stresses. Catalyzes specifically the methylation of bergaptol. Not active on xanthotol, isoscopoletin, scopoletin and esculetin. This chain is Bergaptol O-methyltransferase, found in Kitagawia praeruptora (Peucedanum praeruptorum).